Reading from the N-terminus, the 150-residue chain is Ribosome maturation factor RimP (150 aa).

Belongs to the RimP family.

It is found in the cytoplasm. Its function is as follows. Required for maturation of 30S ribosomal subunits. This Francisella tularensis subsp. holarctica (strain LVS) protein is Ribosome maturation factor RimP.